Reading from the N-terminus, the 227-residue chain is PKHD-type hydroxylase Pden_4677 (227 aa).

One can recognise a Fe2OG dioxygenase domain in the interval 78-178 (HILPPMFNRY…RWASFFWAQS (101 aa)). Histidine 96, aspartate 98, and histidine 159 together coordinate Fe cation. Arginine 169 lines the 2-oxoglutarate pocket.

Fe(2+) is required as a cofactor. It depends on L-ascorbate as a cofactor.

The chain is PKHD-type hydroxylase Pden_4677 from Paracoccus denitrificans (strain Pd 1222).